The sequence spans 72 residues: Protein RALF-like 20 (72 aa).

The first 27 residues, Met-1–Ala-27, serve as a signal peptide directing secretion. Disulfide bonds link Cys-43–Cys-51 and Cys-63–Cys-69.

This sequence belongs to the plant rapid alkalinization factor (RALF) family.

It localises to the secreted. Cell signaling peptide that may regulate plant stress, growth, and development. Mediates a rapid alkalinization of extracellular space by mediating a transient increase in the cytoplasmic Ca(2+) concentration leading to a calcium-dependent signaling events through a cell surface receptor and a concomitant activation of some intracellular mitogen-activated protein kinases. This chain is Protein RALF-like 20 (RALFL20), found in Arabidopsis thaliana (Mouse-ear cress).